The primary structure comprises 481 residues: Probable zeta-carotene desaturase (481 aa).

It belongs to the zeta carotene desaturase family. It depends on decylplastoquinone as a cofactor. 6-decylubiquinone serves as cofactor.

It carries out the reaction 9,9'-di-cis-zeta-carotene + 2 a quinone = 7,7',9,9'-tetra-cis-lycopene + 2 a quinol. It participates in carotenoid biosynthesis; lycopene biosynthesis. Its function is as follows. Catalyzes the conversion of zeta-carotene to lycopene via the intermediary of neurosporene. It carries out two consecutive desaturations (introduction of double bonds) at positions C-7 and C-7'. The polypeptide is Probable zeta-carotene desaturase (zds) (Synechococcus elongatus (strain ATCC 33912 / PCC 7942 / FACHB-805) (Anacystis nidulans R2)).